The sequence spans 115 residues: Class I hydrophobin C (115 aa).

A signal peptide spans 1-19; that stretch reads MFSRVLVAALVALPVLVSA. Disulfide bonds link Cys36-Cys93, Cys43-Cys87, Cys44-Cys74, and Cys94-Cys108.

Belongs to the fungal hydrophobin family. Self-assembles to form functional amyloid fibrils called rodlets. Self-assembly into fibrillar rodlets occurs spontaneously at hydrophobic:hydrophilic interfaces and the rodlets further associate laterally to form amphipathic monolayers.

It is found in the secreted. The protein resides in the cell wall. Its function is as follows. Aerial growth, conidiation, and dispersal of filamentous fungi in the environment rely upon a capability of their secreting small amphipathic proteins called hydrophobins (HPBs) with low sequence identity. Class I can self-assemble into an outermost layer of rodlet bundles on aerial cell surfaces, conferring cellular hydrophobicity that supports fungal growth, development and dispersal; whereas Class II form highly ordered films at water-air interfaces through intermolecular interactions but contribute nothing to the rodlet structure. In Agaricus bisporus (White button mushroom), this protein is Class I hydrophobin C.